Here is a 369-residue protein sequence, read N- to C-terminus: Sulfate permease 2, chloroplastic (369 aa).

Positions 1-21 are disordered; that stretch reads MASTTLLQPALGLPSRVGPRS. The N-terminal 82 residues, 1–82, are a transit peptide targeting the chloroplast; sequence MASTTLLQPA…QQSRGDLLVS (82 aa). 5 helical membrane passes run 110–130, 156–176, 187–207, 229–249, and 335–355; these read VGVA…NVFV, TLML…VAAI, VFLM…TGLM, VVFA…PFVV, and TEAA…TLWI. Residues 153 to 356 enclose the ABC transmembrane type-1 domain; it reads LKMTLMLAFV…ALALGTLWIK (204 aa).

This sequence belongs to the ATP-binding cassette (ABC) (TC 3.A.1) superfamily. In terms of assembly, part of the chloroplast sulfate permease holocomplex. May form a heterodimer with SLUP1.

The protein resides in the plastid. It localises to the chloroplast membrane. Functionally, part of the ABC-type chloroplast envelope-localized sulfate transporter. The sequence is that of Sulfate permease 2, chloroplastic (SULP2) from Chlamydomonas reinhardtii (Chlamydomonas smithii).